The primary structure comprises 353 residues: Photosystem II D2 protein (353 aa).

N-acetylthreonine is present on T2. Residue T2 is modified to Phosphothreonine. Residues 41–61 traverse the membrane as a helical segment; it reads CAYFALGGWFTGTTFVTSWYT. Residue H118 coordinates chlorophyll a. Residues 125–141 traverse the membrane as a helical segment; it reads GFMLRQFELARSVQLRP. Residues Q130 and N143 each contribute to the pheophytin a site. The helical transmembrane segment at 153 to 166 threads the bilayer; the sequence is VFVSVFLIYPLGQS. Residue H198 participates in chlorophyll a binding. Residues 208 to 228 form a helical membrane-spanning segment; it reads AALLCAIHGATVENTLFEDGD. The a plastoquinone site is built by H215 and F262. H215 contacts Fe cation. H269 is a binding site for Fe cation. Residues 279 to 295 form a helical membrane-spanning segment; that stretch reads GLWMSALGVVGLALNLR.

The protein belongs to the reaction center PufL/M/PsbA/D family. PSII is composed of 1 copy each of membrane proteins PsbA, PsbB, PsbC, PsbD, PsbE, PsbF, PsbH, PsbI, PsbJ, PsbK, PsbL, PsbM, PsbT, PsbX, PsbY, PsbZ, Psb30/Ycf12, at least 3 peripheral proteins of the oxygen-evolving complex and a large number of cofactors. It forms dimeric complexes. The D1/D2 heterodimer binds P680, chlorophylls that are the primary electron donor of PSII, and subsequent electron acceptors. It shares a non-heme iron and each subunit binds pheophytin, quinone, additional chlorophylls, carotenoids and lipids. There is also a Cl(-1) ion associated with D1 and D2, which is required for oxygen evolution. The PSII complex binds additional chlorophylls, carotenoids and specific lipids. is required as a cofactor.

It is found in the plastid. The protein resides in the chloroplast thylakoid membrane. The enzyme catalyses 2 a plastoquinone + 4 hnu + 2 H2O = 2 a plastoquinol + O2. In terms of biological role, photosystem II (PSII) is a light-driven water:plastoquinone oxidoreductase that uses light energy to abstract electrons from H(2)O, generating O(2) and a proton gradient subsequently used for ATP formation. It consists of a core antenna complex that captures photons, and an electron transfer chain that converts photonic excitation into a charge separation. The D1/D2 (PsbA/PsbD) reaction center heterodimer binds P680, the primary electron donor of PSII as well as several subsequent electron acceptors. D2 is needed for assembly of a stable PSII complex. The chain is Photosystem II D2 protein from Populus trichocarpa (Western balsam poplar).